A 369-amino-acid chain; its full sequence is 3,7-dimethylxanthine N-methyltransferase TCS1 (369 aa).

Tyr-24 lines the S-adenosyl-L-homocysteine pocket. Thr-31 lines the caffeine pocket. Residues Cys-66, Asn-71, Asp-103, Leu-104, Ser-138, and Phe-139 each coordinate S-adenosyl-L-homocysteine. Caffeine is bound by residues Tyr-156, His-159, and Trp-160. Asn-177 is a binding site for Mg(2+). Arg-225 lines the caffeine pocket. Mg(2+) is bound by residues Asp-263, Phe-265, and Asn-266. Residue Phe-321 coordinates caffeine.

This sequence belongs to the methyltransferase superfamily. Type-7 methyltransferase family. Requires Mg(2+) as cofactor. In terms of tissue distribution, expressed in young leaves and flowers.

The catalysed reaction is 7-methylxanthine + S-adenosyl-L-methionine = theobromine + S-adenosyl-L-homocysteine + H(+). The enzyme catalyses theobromine + S-adenosyl-L-methionine = caffeine + S-adenosyl-L-homocysteine + H(+). It catalyses the reaction 1,7-dimethylxanthine + S-adenosyl-L-methionine = caffeine + S-adenosyl-L-homocysteine + H(+). It functions in the pathway alkaloid biosynthesis. Its function is as follows. Involved in the biosynthesis of caffeine. Catalyzes the conversion of 7-methylxanthine (7mX) to theobromine and of theobromine to caffeine. Has 3-N- and 1-N-methylation activity. This Camellia sinensis (Tea plant) protein is 3,7-dimethylxanthine N-methyltransferase TCS1.